Here is a 60-residue protein sequence, read N- to C-terminus: Large ribosomal subunit protein bL32 (60 aa).

It belongs to the bacterial ribosomal protein bL32 family.

The polypeptide is Large ribosomal subunit protein bL32 (Azotobacter vinelandii (strain DJ / ATCC BAA-1303)).